The following is a 548-amino-acid chain: Probable manganese-dependent inorganic pyrophosphatase (548 aa).

A PPase part 1 region spans residues 1 to 74 (MKALERVYVI…HIETLEPTVE (74 aa)). Mn(2+)-binding residues include H12, D16, and D18. 2 CBS domains span residues 77-132 (ELKN…RLKI) and 254-311 (MSKK…VILV). Residues 306 to 548 (KKVILVDHNE…KIGEVLRRER (243 aa)) are PPase part 2. Mn(2+) contacts are provided by D312, H334, and D386.

It belongs to the PPase class C family. Mn(2+) serves as cofactor.

It localises to the cytoplasm. It catalyses the reaction diphosphate + H2O = 2 phosphate + H(+). The sequence is that of Probable manganese-dependent inorganic pyrophosphatase (ppaC) from Thermotoga maritima (strain ATCC 43589 / DSM 3109 / JCM 10099 / NBRC 100826 / MSB8).